We begin with the raw amino-acid sequence, 305 residues long: Putative glutamine--fructose-6-phosphate aminotransferase [isomerizing] (305 aa).

The Nucleophile; for GATase activity role is filled by C2. In terms of domain architecture, Glutamine amidotransferase type-2 spans 2–305; that stretch reads CGIFGYCNFL…RLCITSAVCE (304 aa).

It catalyses the reaction D-fructose 6-phosphate + L-glutamine = D-glucosamine 6-phosphate + L-glutamate. It functions in the pathway nucleotide-sugar biosynthesis; UDP-N-acetyl-alpha-D-glucosamine biosynthesis; alpha-D-glucosamine 6-phosphate from D-fructose 6-phosphate: step 1/1. Involved in amino sugar synthesis (formation of chitin, supplies the amino sugars of asparagine-linked oligosaccharides of glycoproteins). This chain is Putative glutamine--fructose-6-phosphate aminotransferase [isomerizing], found in Saccharomyces cerevisiae (strain Lalvin EC1118 / Prise de mousse) (Baker's yeast).